The chain runs to 164 residues: Large ribosomal subunit protein bL17 (164 aa).

The disordered stretch occupies residues 127 to 164 (RARTDSVPARKGAGKKDASRVSGTVPDGQSQKIGKKKE).

The protein belongs to the bacterial ribosomal protein bL17 family. Part of the 50S ribosomal subunit. Contacts protein L32.

The protein is Large ribosomal subunit protein bL17 of Treponema pallidum (strain Nichols).